The following is a 645-amino-acid chain: Synaptotagmin-16 (645 aa).

3 disordered regions span residues 102 to 121, 144 to 192, and 206 to 344; these read AQNSSPSLSQHAKDSCSTMS, EHHL…DSDE, and QSFR…PSGV. A compositionally biased stretch (polar residues) spans 167 to 177; that stretch reads ETVNGKKQVNS. Positions 179–192 are enriched in acidic residues; sequence GDDEELSTSSDSDE. The segment covering 287-303 has biased composition (polar residues); that stretch reads HQESSVVQSLRRQSTEG. The C2 1 domain maps to 350–469; the sequence is KCGDLDVIFE…HPEGEMKVTL (120 aa). The segment at 478–503 is disordered; it reads SSGGSPLSPSAVSHSDSTSSTQSLSH. The span at 485–502 shows a compositional bias: low complexity; the sequence is SPSAVSHSDSTSSTQSLS. The C2 2 domain occupies 505–640; sequence GAPELLVGLS…TKGQQICRWH (136 aa).

Belongs to the synaptotagmin family. In terms of assembly, homodimer. Can also form heterodimers. Expressed in brain.

In terms of biological role, may be involved in the trafficking and exocytosis of secretory vesicles in non-neuronal tissues. Is Ca(2+)-independent. The polypeptide is Synaptotagmin-16 (SYT16) (Homo sapiens (Human)).